The sequence spans 622 residues: Low affinity potassium transport system protein Kup (622 aa).

Helical transmembrane passes span 9 to 29 (LPAI…TSPL), 49 to 69 (VFGF…IKYL), 103 to 123 (VIMG…TPAI), 137 to 157 (PQLD…LFMI), 165 to 185 (VGKL…VLGL), 213 to 233 (VSFI…ALYA), 247 to 267 (WFTV…ALLL), 276 to 296 (PFFL…AALA), 337 to 357 (IYIP…IVSF), 363 to 383 (LAAA…ILST), 396 to 416 (FVAL…SANL), and 419 to 439 (LLSG…IMTT).

The protein belongs to the HAK/KUP transporter (TC 2.A.72) family.

Its subcellular location is the cell inner membrane. It carries out the reaction K(+)(in) + H(+)(in) = K(+)(out) + H(+)(out). Its function is as follows. Responsible for the low-affinity transport of potassium into the cell. Likely operates as a K(+):H(+) symporter. This is Low affinity potassium transport system protein Kup from Salmonella paratyphi B (strain ATCC BAA-1250 / SPB7).